A 155-amino-acid chain; its full sequence is Phytohormone-binding protein CSBP (155 aa).

Trans-zeatin-binding positions include leucine 22, glutamine 67, glutamate 69, and 139–142; that span reads TLMY. Glutamine 67 lines the gibberellin A3 pocket. Threonine 139 contributes to the gibberellin A3 binding site.

The protein belongs to the BetVI family. Monomer.

Binds the cytokinin trans-zeatin in vitro. Binds gibberellin A3 (GA3) in vitro. The protein is Phytohormone-binding protein CSBP of Vigna radiata var. radiata (Mung bean).